The sequence spans 94 residues: Long neurotoxin LNTX1 (94 aa).

The first 21 residues, 1 to 21 (MKILLLTLVVVTIMCLDLGYT), serve as a signal peptide directing secretion. 5 cysteine pairs are disulfide-bonded: C24–C43, C36–C64, C49–C53, C68–C79, and C80–C85.

It belongs to the three-finger toxin family. Long-chain subfamily. Type II alpha-neurotoxin sub-subfamily. In terms of assembly, monomer. In terms of tissue distribution, expressed by the venom gland.

It is found in the secreted. Binds with high affinity to muscular (alpha-1/CHRNA1) and neuronal (alpha-7/CHRNA7) nicotinic acetylcholine receptor (nAChR) and inhibits acetylcholine from binding to the receptor, thereby impairing neuromuscular and neuronal transmission. Recombinant LNTX1 leads to a functional block of the muscle-type acetylcholine receptors. Has a cytotoxic activity. This Ophiophagus hannah (King cobra) protein is Long neurotoxin LNTX1.